A 244-amino-acid polypeptide reads, in one-letter code: 5-oxoprolinase subunit A (244 aa).

Belongs to the LamB/PxpA family. As to quaternary structure, forms a complex composed of PxpA, PxpB and PxpC.

It catalyses the reaction 5-oxo-L-proline + ATP + 2 H2O = L-glutamate + ADP + phosphate + H(+). Catalyzes the cleavage of 5-oxoproline to form L-glutamate coupled to the hydrolysis of ATP to ADP and inorganic phosphate. The sequence is that of 5-oxoprolinase subunit A from Salmonella typhimurium (strain LT2 / SGSC1412 / ATCC 700720).